A 436-amino-acid chain; its full sequence is Tol-Pal system protein TolB (436 aa).

The first 28 residues, 1–28 (MEMLRRNFFRLLMVLVAGCGLIASPAKA), serve as a signal peptide directing secretion.

Belongs to the TolB family. In terms of assembly, the Tol-Pal system is composed of five core proteins: the inner membrane proteins TolA, TolQ and TolR, the periplasmic protein TolB and the outer membrane protein Pal. They form a network linking the inner and outer membranes and the peptidoglycan layer.

The protein localises to the periplasm. Its function is as follows. Part of the Tol-Pal system, which plays a role in outer membrane invagination during cell division and is important for maintaining outer membrane integrity. The polypeptide is Tol-Pal system protein TolB (Sinorhizobium medicae (strain WSM419) (Ensifer medicae)).